The sequence spans 352 residues: Phosphatidylglycerol--prolipoprotein diacylglyceryl transferase (352 aa).

4 consecutive transmembrane segments (helical) span residues 20–40 (WYGLSYMMGFICAYILITWLA), 55–75 (FITYAAIGTLVGGRLGYVLFY), 97–117 (EGGMASHGGIIGIVIACLLYA), and 122–142 (VNSLYLLDLVAVTGPIGVFFG). Arg-143 is a binding site for a 1,2-diacyl-sn-glycero-3-phospho-(1'-sn-glycerol). Transmembrane regions (helical) follow at residues 248–268 (SQLFAAFGEGLLIFMFLFFLW), 275–295 (GFIAACFVLIYAVVRVVDEHF), and 314–334 (WLSLAMFVVGLILMVVWTRAA).

Belongs to the Lgt family.

It localises to the cell inner membrane. It catalyses the reaction L-cysteinyl-[prolipoprotein] + a 1,2-diacyl-sn-glycero-3-phospho-(1'-sn-glycerol) = an S-1,2-diacyl-sn-glyceryl-L-cysteinyl-[prolipoprotein] + sn-glycerol 1-phosphate + H(+). It participates in protein modification; lipoprotein biosynthesis (diacylglyceryl transfer). Its function is as follows. Catalyzes the transfer of the diacylglyceryl group from phosphatidylglycerol to the sulfhydryl group of the N-terminal cysteine of a prolipoprotein, the first step in the formation of mature lipoproteins. This chain is Phosphatidylglycerol--prolipoprotein diacylglyceryl transferase, found in Bdellovibrio bacteriovorus (strain ATCC 15356 / DSM 50701 / NCIMB 9529 / HD100).